The sequence spans 157 residues: Endoribonuclease YbeY (157 aa).

The Zn(2+) site is built by H123, H127, and H133.

This sequence belongs to the endoribonuclease YbeY family. It depends on Zn(2+) as a cofactor.

Its subcellular location is the cytoplasm. Single strand-specific metallo-endoribonuclease involved in late-stage 70S ribosome quality control and in maturation of the 3' terminus of the 16S rRNA. This is Endoribonuclease YbeY from Limosilactobacillus fermentum (strain NBRC 3956 / LMG 18251) (Lactobacillus fermentum).